Here is a 377-residue protein sequence, read N- to C-terminus: F-box protein At2g05970 (377 aa).

One can recognise an F-box domain in the interval 8 to 55 (ASWSELCPDVLRCVFELLSFSDLNRTRSVCSSWHSASRHCVPTQNQIP).

The chain is F-box protein At2g05970 from Arabidopsis thaliana (Mouse-ear cress).